A 114-amino-acid polypeptide reads, in one-letter code: Large ribosomal subunit protein bL20 (114 aa).

It belongs to the bacterial ribosomal protein bL20 family.

Its function is as follows. Binds directly to 23S ribosomal RNA and is necessary for the in vitro assembly process of the 50S ribosomal subunit. It is not involved in the protein synthesizing functions of that subunit. In Amoebophilus asiaticus (strain 5a2), this protein is Large ribosomal subunit protein bL20.